The primary structure comprises 315 residues: Fe(3+)-citrate-binding protein YfmC (315 aa).

The first 18 residues, 1-18 (MRTYSNKLIAIMSVLLLA), serve as a signal peptide directing secretion. C19 is lipidated: N-palmitoyl cysteine. A lipid anchor (S-diacylglycerol cysteine) is attached at C19. Low complexity predominate over residues 27 to 36 (SSQNNNGSGK). Positions 27–52 (SSQNNNGSGKSESKDSRVIHDEEGKT) are disordered. Residues 37-51 (SESKDSRVIHDEEGK) show a composition bias toward basic and acidic residues. In terms of domain architecture, Fe/B12 periplasmic-binding spans 60 to 315 (RVVVLELSFL…KDVLKKVYNK (256 aa)).

It belongs to the bacterial solute-binding protein 8 family. In terms of assembly, the complex is composed of one ATP-binding protein (YfmF), two transmembrane proteins (YfmD and YfmE) and a solute-binding protein (YfmC).

It is found in the cell membrane. Functionally, part of the ABC transporter complex YfmCDEF involved in citrate-dependent Fe(3+) import. Binds citrate-dependent Fe(3+) and delivers it to the surface of YfmDE. The chain is Fe(3+)-citrate-binding protein YfmC (yfmC) from Bacillus subtilis (strain 168).